We begin with the raw amino-acid sequence, 104 residues long: Large ribosomal subunit protein uL24 (104 aa).

Belongs to the universal ribosomal protein uL24 family. Part of the 50S ribosomal subunit.

In terms of biological role, one of two assembly initiator proteins, it binds directly to the 5'-end of the 23S rRNA, where it nucleates assembly of the 50S subunit. One of the proteins that surrounds the polypeptide exit tunnel on the outside of the subunit. The chain is Large ribosomal subunit protein uL24 from Pseudomonas fluorescens (strain ATCC BAA-477 / NRRL B-23932 / Pf-5).